Here is a 480-residue protein sequence, read N- to C-terminus: Proline--tRNA ligase (480 aa).

Belongs to the class-II aminoacyl-tRNA synthetase family. ProS type 3 subfamily. Homodimer.

The protein resides in the cytoplasm. The catalysed reaction is tRNA(Pro) + L-proline + ATP = L-prolyl-tRNA(Pro) + AMP + diphosphate. Functionally, catalyzes the attachment of proline to tRNA(Pro) in a two-step reaction: proline is first activated by ATP to form Pro-AMP and then transferred to the acceptor end of tRNA(Pro). This is Proline--tRNA ligase from Pyrococcus abyssi (strain GE5 / Orsay).